A 418-amino-acid chain; its full sequence is Gamma-glutamyl phosphate reductase (418 aa).

Belongs to the gamma-glutamyl phosphate reductase family.

It localises to the cytoplasm. It catalyses the reaction L-glutamate 5-semialdehyde + phosphate + NADP(+) = L-glutamyl 5-phosphate + NADPH + H(+). The protein operates within amino-acid biosynthesis; L-proline biosynthesis; L-glutamate 5-semialdehyde from L-glutamate: step 2/2. Catalyzes the NADPH-dependent reduction of L-glutamate 5-phosphate into L-glutamate 5-semialdehyde and phosphate. The product spontaneously undergoes cyclization to form 1-pyrroline-5-carboxylate. The chain is Gamma-glutamyl phosphate reductase from Photobacterium profundum (strain SS9).